Here is a 280-residue protein sequence, read N- to C-terminus: 4-diphosphocytidyl-2-C-methyl-D-erythritol kinase (280 aa).

Lys11 is a catalytic residue. 95–105 contacts ATP; it reads PVGAGLGGGSS. The active site involves Asp137.

Belongs to the GHMP kinase family. IspE subfamily.

It catalyses the reaction 4-CDP-2-C-methyl-D-erythritol + ATP = 4-CDP-2-C-methyl-D-erythritol 2-phosphate + ADP + H(+). It participates in isoprenoid biosynthesis; isopentenyl diphosphate biosynthesis via DXP pathway; isopentenyl diphosphate from 1-deoxy-D-xylulose 5-phosphate: step 3/6. Catalyzes the phosphorylation of the position 2 hydroxy group of 4-diphosphocytidyl-2C-methyl-D-erythritol. The chain is 4-diphosphocytidyl-2-C-methyl-D-erythritol kinase from Geobacter sp. (strain M21).